A 499-amino-acid chain; its full sequence is Protein-cysteine N-palmitoyltransferase HHAT (499 aa).

Over 1 to 5 the chain is Cytoplasmic; it reads MLPGW. A helical transmembrane segment spans residues 6–22; sequence ELTLCLLVSLGFHFRSF. At 23–67 the chain is on the lumenal side; that stretch reads YEVYKVSREHEEELDQEFELEMDTLFGGLKKDPTDFEWNFWMEWG. The chain crosses the membrane as a helical span at residues 68–84; that stretch reads KRRLVWLFIGHMAVSQL. The Cytoplasmic segment spans residues 85–94; it reads ATLLTKKHRP. The segment at 91–155 is essential for palmitoylation of SHH; the sequence is KHRPWIVMVY…TLRLQSVEEV (65 aa). Residues 95 to 119 lie within the membrane without spanning it; that stretch reads WIVMVYGMWACWCVLGAPGVVMVLL. Residues 120–131 lie on the Cytoplasmic side of the membrane; that stretch reads HSTIAFCVAQFR. A helical membrane pass occupies residues 132 to 148; it reads SVLLSWLCSLLLLSTLR. At 149–162 the chain is on the lumenal side; that stretch reads LQSVEEVKRRWYKT. The helical transmembrane segment at 163-183 threads the bilayer; the sequence is ENEYYLLQFTLTVRCLYYTSF. The Cytoplasmic segment spans residues 184–208; that stretch reads SLELCRQPPSAQPTPSAQGASHSYP. A lipid anchor (S-palmitoyl cysteine) is attached at Cys188. Residues 209 to 223 lie within the membrane without spanning it; it reads WLLTYVFYYPVFHNG. Topologically, residues 224–249 are cytoplasmic; the sequence is PILNFPEFFRQMQQPELNSLQHSLCI. Cys248 is lipidated: S-palmitoyl cysteine. The helical transmembrane segment at 250–277 threads the bilayer; the sequence is VAKGLGRLLCWWWLAELMVHLMYMHALY. The Lumenal portion of the chain corresponds to 278–287; sequence SSAPLLESVS. A helical transmembrane segment spans residues 288 to 316; it reads CWTLGGLALAQVLFFYVKYLVLFGVPALL. Residues 317-369 lie on the Cytoplasmic side of the membrane; the sequence is MRLDGLTPPPLPRCVSTMFSFTGMWRYFDVGLHNFLIRYVYIPLGGSQHGLLG. Cys330 is lipidated: S-palmitoyl cysteine. A helical transmembrane segment spans residues 370–386; sequence TLLSTATTFAFVSYWHG. His385 is a catalytic residue. At 387–389 the chain is on the lumenal side; it reads SYE. A helical transmembrane segment spans residues 390 to 405; that stretch reads DLWCWAALNWLGVTVE. Residues 406–433 lie on the Cytoplasmic side of the membrane; it reads SGVRRLLETPCVRETLARHLSPQAHHRL. Cys416 carries S-palmitoyl cysteine lipidation. Residues 434–454 traverse the membrane as a helical segment; sequence HALLAACSTSMLILFNLVFLG. 454 to 461 provides a ligand contact to GTP; sequence GGIQVGKT. Over 455 to 468 the chain is Lumenal; that stretch reads GIQVGKTYWNRIFL. The chain crosses the membrane as a helical span at residues 469-487; the sequence is QGWPWVTLSVLGFLYCYSH. Residues 488-499 are Cytoplasmic-facing; the sequence is VDIAWAQTYTVL.

The protein belongs to the membrane-bound acyltransferase family. HHAT subfamily.

Its subcellular location is the endoplasmic reticulum membrane. It is found in the golgi apparatus membrane. The enzyme catalyses N-terminal L-cysteinyl-[protein] + hexadecanoyl-CoA = N-terminal N-hexadecanoyl-L-cysteinyl-[protein] + CoA + H(+). The catalysed reaction is N-terminal L-cysteinyl-[protein]-C-terminal glycyl cholesterol ester + hexadecanoyl-CoA = N-terminal N-hexadecanoyl-L-cysteinyl-[protein]-C-terminal glycyl cholesterol ester + CoA + H(+). In terms of biological role, palmitoyl acyltransferase that catalyzes N-terminal palmitoylation of SHH; which is required for SHH signaling during limb development. It also catalyzes N-terminal palmitoylation of DHH. Promotes the transfer of palmitoyl-CoA from the cytoplasmic to the luminal side of the endoplasmic reticulum membrane, where SHH palmitoylation occurs. Plays a role in proper testis cord formation and the differentiation of Leydig cells. The polypeptide is Protein-cysteine N-palmitoyltransferase HHAT (Hhat) (Mus musculus (Mouse)).